An 804-amino-acid chain; its full sequence is Angiotensin-converting enzyme 2 (804 aa).

Residues 1–17 (MTGSFWLLLSLVAVTAA) form the signal peptide. At 18–739 (QSTTEEQAKT…LGPPYEPPVT (722 aa)) the chain is on the extracellular side. In terms of domain architecture, Peptidase M2 spans 19 to 606 (STTEEQAKTF…QNRNSFVGWS (588 aa)). N-linked (GlcNAc...) asparagine glycans are attached at residues N53 and N90. R168 serves as a coordination point for chloride. Position 272 (R272) interacts with substrate. N298 carries N-linked (GlcNAc...) asparagine glycosylation. A disulfide bond links C343 and C360. 344–345 (HP) contacts substrate. H373 contributes to the Zn(2+) binding site. The Proton acceptor role is filled by E374. Zn(2+) is bound by residues H377 and E401. N-linked (GlcNAc...) asparagine glycosylation is present at N431. W476 and K480 together coordinate chloride. Catalysis depends on H504, which acts as the Proton donor. Substrate is bound at residue Y514. C529 and C541 are oxidised to a cystine. A glycan (N-linked (GlcNAc...) asparagine) is linked at N545. The Collectrin-like domain occupies 613-804 (SDQSIKVRIS…QNIDDVQTSL (192 aa)). Residues 651–658 (RKYFSEAR) are essential for cleavage by ADAM17. N-linked (GlcNAc...) asparagine glycosylation is found at N659 and N689. Residues 696–715 (RTEVENAIRLSRDRINDVFQ) are essential for cleavage by TMPRSS11D and TMPRSS2. A helical membrane pass occupies residues 740-760 (IWLIIFGVVMGVVVIGIVVLI). The Cytoplasmic portion of the chain corresponds to 761 to 804 (FTGIRNRRKKNQASSEENPYGSVDLNKGENNSGFQNIDDVQTSL). The segment at 771–804 (NQASSEENPYGSVDLNKGENNSGFQNIDDVQTSL) is disordered. Positions 777–785 (ENPYGSVDL) match the LIR motif. The residue at position 780 (Y780) is a Phosphotyrosine. An Endocytic sorting signal motif is present at residues 780 to 783 (YGSV). An SH2-binding motif is present at residues 780–784 (YGSVD). S782 carries the phosphoserine modification. K787 participates in a covalent cross-link: Glycyl lysine isopeptide (Lys-Gly) (interchain with G-Cter in ubiquitin). A compositionally biased stretch (polar residues) spans 788 to 804 (GENNSGFQNIDDVQTSL). A PTB motif is present at residues 791–794 (NSGF). Positions 802 to 804 (TSL) match the PDZ-binding motif.

This sequence belongs to the peptidase M2 family. In terms of assembly, homodimer. Interacts with the catalytically active form of TMPRSS2. Interacts with SLC6A19; this interaction is essential for expression and function of SLC6A19 in intestine. Interacts with ITGA5:ITGB1. Probably interacts (via endocytic sorting signal motif) with AP2M1; the interaction is inhibited by phosphorylation of Tyr-780. Interacts (via PDZ-binding motif) with NHERF1 (via PDZ domains); the interaction may enhance ACE2 membrane residence. Zn(2+) serves as cofactor. It depends on chloride as a cofactor. In terms of processing, proteolytic cleavage by ADAM17 generates a secreted form. Also cleaved by serine proteases: TMPRSS2, TMPRSS11D and HPN/TMPRSS1. Post-translationally, phosphorylated. Phosphorylation at Tyr-780 probably inhibits interaction with AP2M1 and enables interactions with proteins containing SH2 domains. Ubiquitinated. Ubiquitinated on Lys-787 via 'Lys-48'-linked ubiquitin. 'Lys-48'-linked deubiquitinated by USP50 on the Lys-787; leading to its stabilization.

It is found in the secreted. The protein localises to the cell membrane. The protein resides in the cytoplasm. Its subcellular location is the cell projection. It localises to the cilium. It is found in the apical cell membrane. The catalysed reaction is angiotensin II + H2O = angiotensin-(1-7) + L-phenylalanine. It carries out the reaction angiotensin I + H2O = angiotensin-(1-9) + L-leucine. The enzyme catalyses bradykinin(1-8) + H2O = bradykinin(1-7) + L-phenylalanine. It catalyses the reaction neurotensin + H2O = neurotensin-(1-12) + L-leucine. The catalysed reaction is kinetensin + H2O = kinetensin-(1-8) + L-leucine. It carries out the reaction dynorphin A-(1-13) + H2O = dynorphin A-(1-12) + L-lysine. The enzyme catalyses apelin-13 + H2O = apelin-12 + L-phenylalanine. It catalyses the reaction [Pyr1]apelin-13 + H2O = [Pyr1]apelin-12 + L-phenylalanine. The catalysed reaction is apelin-17 + H2O = apelin-16 + L-phenylalanine. Essential counter-regulatory carboxypeptidase of the renin-angiotensin hormone system that is a critical regulator of blood volume, systemic vascular resistance, and thus cardiovascular homeostasis. Converts angiotensin I to angiotensin 1-9, a nine-amino acid peptide with anti-hypertrophic effects in cardiomyocytes, and angiotensin II to angiotensin 1-7, which then acts as a beneficial vasodilator and anti-proliferation agent, counterbalancing the actions of the vasoconstrictor angiotensin II. Also removes the C-terminal residue from three other vasoactive peptides, neurotensin, kinetensin, and des-Arg bradykinin, but is not active on bradykinin. Also cleaves other biological peptides, such as apelins, casomorphins and dynorphin A. Plays an important role in amino acid transport by acting as binding partner of amino acid transporter SLC6A19 in intestine, regulating trafficking, expression on the cell surface, and its catalytic activity. In Bos taurus (Bovine), this protein is Angiotensin-converting enzyme 2 (ACE2).